A 139-amino-acid polypeptide reads, in one-letter code: uncharacterized protein (139 aa).

A run of 2 helical transmembrane segments spans residues 35–55 (LVFL…SFLI) and 57–77 (FGIL…LTVI).

It is found in the membrane. This is an uncharacterized protein from Saccharomyces cerevisiae (strain ATCC 204508 / S288c) (Baker's yeast).